Reading from the N-terminus, the 167-residue chain is RNA pyrophosphohydrolase (167 aa).

The Nudix hydrolase domain maps to 7–160 (PYRPCVGVMV…KRRAYEEVVA (154 aa)). The Nudix box motif lies at 48-69 (GGIDEGEDPLEAACRELYEETG).

The protein belongs to the Nudix hydrolase family. RppH subfamily. A divalent metal cation is required as a cofactor.

Functionally, accelerates the degradation of transcripts by removing pyrophosphate from the 5'-end of triphosphorylated RNA, leading to a more labile monophosphorylated state that can stimulate subsequent ribonuclease cleavage. This Rhizobium meliloti (strain 1021) (Ensifer meliloti) protein is RNA pyrophosphohydrolase.